The sequence spans 154 residues: Protein aau3 (154 aa).

The HTH rrf2-type domain occupies 2-132 (RLTKQTNYAV…QGYTIDDLVK (131 aa)). Cysteine 91, cysteine 99, and cysteine 105 together coordinate [2Fe-2S] cluster.

Requires [2Fe-2S] cluster as cofactor.

Functionally, required for growth utilizing PHB cycle intermediates. The protein is Protein aau3 (aau3) of Rhizobium meliloti (strain 1021) (Ensifer meliloti).